We begin with the raw amino-acid sequence, 281 residues long: DegV domain-containing protein spr0652 (281 aa).

Residues 3 to 280 (WKIIADSGCD…EGGLLMGYEI (278 aa)) form the DegV domain. 2 residues coordinate hexadecanoate: Ser-63 and Ser-91.

May bind long-chain fatty acids, such as palmitate, and may play a role in lipid transport or fatty acid metabolism. The polypeptide is DegV domain-containing protein spr0652 (Streptococcus pneumoniae (strain ATCC BAA-255 / R6)).